We begin with the raw amino-acid sequence, 1098 residues long: Transcription elongation regulator 1 (1098 aa).

Basic and acidic residues predominate over residues 1-15; sequence MAERGGDGGESERFN. Residues 1 to 105 are disordered; it reads MAERGGDGGE…RPPFMPPPMS (105 aa). Serine 11 is subject to Phosphoserine. Arginine 20 bears the Omega-N-methylarginine mark. 4 positions are modified to asymmetric dimethylarginine: arginine 28, arginine 30, arginine 41, and arginine 48. Residues 32–105 show a composition bias toward pro residues; that stretch reads PAPPPNAVMR…RPPFMPPPMS (74 aa). The WW 1 domain maps to 131–164; it reads PPTEEIWVENKTPDGKVYYYNARTRESAWTKPDG. Positions 184–244 form a coiled coil; it reads QAQAQAQAQA…AQAQAQAQVQ (61 aa). Low complexity predominate over residues 259–333; the sequence is STPTTSSPAP…PTATPVQTVP (75 aa). Positions 259 to 348 are disordered; the sequence is STPTTSSPAP…TLPPAVPHSV (90 aa). Over residues 334 to 344 the composition is skewed to pro residues; the sequence is QPHPQTLPPAV. The WW 2 domain maps to 429–462; it reads ATAVSEWTEYKTADGKTYYYNNRTLESTWEKPQE. Basic and acidic residues-rich tracts occupy residues 469 to 481 and 496 to 506; these read LEEK…KEPS and EEPIKEIKEEP. Residues 469 to 526 are disordered; it reads LEEKIKEPIKEPSEEPLPMETEEEDPKEEPIKEIKEEPKEEEMTEEEKAAQKAKPVAT. Glycyl lysine isopeptide (Lys-Gly) (interchain with G-Cter in SUMO2) cross-links involve residues lysine 503 and lysine 507. The region spanning 528–561 is the WW 3 domain; sequence PIPGTPWCVVWTGDERVFFYNPTTRLSMWDRPDD. Residues 606–655 are a coiled coil; it reads AIKEEQELMEEINEDEPVKAKKRKRDDNKDIDSEKEAAMEAEIKAARERA. A Glycyl lysine isopeptide (Lys-Gly) (interchain with G-Cter in SUMO2) cross-link involves residue lysine 608. Positions 615-640 are disordered; it reads EEINEDEPVKAKKRKRDDNKDIDSEK. Residues 626–630 carry the Nuclear localization signal motif; sequence KKRKR. The span at 630 to 640 shows a compositional bias: basic and acidic residues; that stretch reads RDDNKDIDSEK. Phosphoserine is present on serine 638. FF domains follow at residues 659–712, 725–779, and 791–846; these read LEAR…YVKT, IMQA…FVAA, and RGEK…YIEK. Residue serine 834 is modified to Phosphoserine. Residues 844 to 906 are a coiled coil; sequence IEKIAKNLDS…EEAIQNFKAL (63 aa). Residues 870 to 895 are disordered; that stretch reads REREREVQKARSEQTKEIDREREQHK. FF domains follow at residues 896–952, 954–1010, and 1012–1077; these read REEA…HIEA, TKKK…YIRD, and YITA…YVDD. Phosphoserine is present on serine 933. The disordered stretch occupies residues 1076-1098; that stretch reads DDLDRRGPPPPPTASEPTRRSTK.

In terms of assembly, binds formin. Interacts (via the second WW domain) with TREX1 (via proline-rich region). Binds RNA polymerase II, HD and SF1. As to expression, detected in brain neurons.

The protein resides in the nucleus. In terms of biological role, transcription factor that binds RNA polymerase II and inhibits the elongation of transcripts from target promoters. Regulates transcription elongation in a TATA box-dependent manner. Necessary for TAT-dependent activation of the human immunodeficiency virus type 1 (HIV-1) promoter. The protein is Transcription elongation regulator 1 (TCERG1) of Homo sapiens (Human).